Consider the following 110-residue polypeptide: UPF0122 protein LMOf2365_1829 (110 aa).

This sequence belongs to the UPF0122 family.

Functionally, might take part in the signal recognition particle (SRP) pathway. This is inferred from the conservation of its genetic proximity to ftsY/ffh. May be a regulatory protein. This chain is UPF0122 protein LMOf2365_1829, found in Listeria monocytogenes serotype 4b (strain F2365).